A 224-amino-acid polypeptide reads, in one-letter code: Ribose-5-phosphate isomerase A (224 aa).

Substrate contacts are provided by residues Thr-26 to Thr-29, Asp-82 to Asp-85, and Lys-95 to Gly-98. The Proton acceptor role is filled by Glu-104. Substrate is bound at residue Lys-122.

Belongs to the ribose 5-phosphate isomerase family. In terms of assembly, homodimer.

The enzyme catalyses aldehydo-D-ribose 5-phosphate = D-ribulose 5-phosphate. It functions in the pathway carbohydrate degradation; pentose phosphate pathway; D-ribose 5-phosphate from D-ribulose 5-phosphate (non-oxidative stage): step 1/1. In terms of biological role, catalyzes the reversible conversion of ribose-5-phosphate to ribulose 5-phosphate. The polypeptide is Ribose-5-phosphate isomerase A (Streptococcus suis (strain 98HAH33)).